The primary structure comprises 475 residues: Ribulose bisphosphate carboxylase large chain (475 aa).

Residues 1-2 constitute a propeptide that is removed on maturation; sequence MS. N-acetylproline is present on Pro3. An N6,N6,N6-trimethyllysine modification is found at Lys14. Asn123 and Thr173 together coordinate substrate. The active-site Proton acceptor is Lys175. Lys177 lines the substrate pocket. Mg(2+) contacts are provided by Lys201, Asp203, and Glu204. Lys201 bears the N6-carboxylysine mark. Residue His294 is the Proton acceptor of the active site. Substrate contacts are provided by Arg295, His327, and Ser379.

Belongs to the RuBisCO large chain family. Type I subfamily. In terms of assembly, heterohexadecamer of 8 large chains and 8 small chains; disulfide-linked. The disulfide link is formed within the large subunit homodimers. Requires Mg(2+) as cofactor. The disulfide bond which can form in the large chain dimeric partners within the hexadecamer appears to be associated with oxidative stress and protein turnover.

It is found in the plastid. Its subcellular location is the chloroplast. It carries out the reaction 2 (2R)-3-phosphoglycerate + 2 H(+) = D-ribulose 1,5-bisphosphate + CO2 + H2O. It catalyses the reaction D-ribulose 1,5-bisphosphate + O2 = 2-phosphoglycolate + (2R)-3-phosphoglycerate + 2 H(+). Its function is as follows. RuBisCO catalyzes two reactions: the carboxylation of D-ribulose 1,5-bisphosphate, the primary event in carbon dioxide fixation, as well as the oxidative fragmentation of the pentose substrate in the photorespiration process. Both reactions occur simultaneously and in competition at the same active site. The protein is Ribulose bisphosphate carboxylase large chain of Notothixos subaureus (Golden mistletoe).